A 133-amino-acid polypeptide reads, in one-letter code: ATP synthase epsilon chain, chloroplastic (133 aa).

Belongs to the ATPase epsilon chain family. F-type ATPases have 2 components, CF(1) - the catalytic core - and CF(0) - the membrane proton channel. CF(1) has five subunits: alpha(3), beta(3), gamma(1), delta(1), epsilon(1). CF(0) has three main subunits: a, b and c.

The protein localises to the plastid. It localises to the chloroplast thylakoid membrane. Its function is as follows. Produces ATP from ADP in the presence of a proton gradient across the membrane. This is ATP synthase epsilon chain, chloroplastic from Atropa belladonna (Belladonna).